Reading from the N-terminus, the 283-residue chain is Elongation factor Ts (283 aa).

The segment at 82–85 is involved in Mg(2+) ion dislocation from EF-Tu; the sequence is TDFV.

It belongs to the EF-Ts family.

The protein resides in the cytoplasm. In terms of biological role, associates with the EF-Tu.GDP complex and induces the exchange of GDP to GTP. It remains bound to the aminoacyl-tRNA.EF-Tu.GTP complex up to the GTP hydrolysis stage on the ribosome. The sequence is that of Elongation factor Ts from Photorhabdus laumondii subsp. laumondii (strain DSM 15139 / CIP 105565 / TT01) (Photorhabdus luminescens subsp. laumondii).